Consider the following 512-residue polypeptide: uncharacterized protein (512 aa).

The next 2 helical transmembrane spans lie at 20-40 and 222-242; these read IFPVFMVMIIGLISFYAIYIW and GIALLVVMGVVLILLVIFGYI. In terms of domain architecture, Histidine kinase spans 297 to 512; that stretch reads EQLIQSIEQT…TLMCYQIPLV (216 aa). The residue at position 325 (His-325) is a Phosphohistidine; by autocatalysis.

Post-translationally, autophosphorylated.

It is found in the cell membrane. It carries out the reaction ATP + protein L-histidine = ADP + protein N-phospho-L-histidine.. Functionally, probable member of the two-component regulatory system SE_0166/SE_0165. May activate SE_0165 by phosphorylation. This is an uncharacterized protein from Staphylococcus epidermidis (strain ATCC 12228 / FDA PCI 1200).